Reading from the N-terminus, the 85-residue chain is Toxin BmKaTx10 (85 aa).

The first 19 residues, 1 to 19 (MNYLVMVSFALLLMTGVES), serve as a signal peptide directing secretion. The LCN-type CS-alpha/beta domain occupies 21 to 83 (RDGYIALPHN…VPIRVPGRCH (63 aa)). 4 disulfides stabilise this stretch: C31/C82, C35/C55, C41/C65, and C45/C67.

The protein belongs to the long (4 C-C) scorpion toxin superfamily. Sodium channel inhibitor family. Alpha subfamily. As to expression, expressed by the venom gland.

Its subcellular location is the secreted. Alpha toxins bind voltage-independently at site-3 of sodium channels (Nav) and inhibit the inactivation of the activated channels, thereby blocking neuronal transmission. In Olivierus martensii (Manchurian scorpion), this protein is Toxin BmKaTx10.